The chain runs to 90 residues: Small ribosomal subunit protein bS20 (90 aa).

The segment covering 1-11 (MANIKSSEKDI) has biased composition (basic and acidic residues). Residues 1–29 (MANIKSSEKDIRRTKRRNAANSQNRSRLR) form a disordered region.

Belongs to the bacterial ribosomal protein bS20 family.

In terms of biological role, binds directly to 16S ribosomal RNA. In Leptospira borgpetersenii serovar Hardjo-bovis (strain JB197), this protein is Small ribosomal subunit protein bS20.